The sequence spans 365 residues: 3-isopropylmalate dehydrogenase (365 aa).

Residue 78–91 coordinates NAD(+); sequence GYKWDSLPRSQRPE. Arginine 98, arginine 108, arginine 136, and aspartate 226 together coordinate substrate. The Mg(2+) site is built by aspartate 226, aspartate 250, and aspartate 254. 284 to 296 contributes to the NAD(+) binding site; the sequence is GSAPDIAGQDKAN.

The protein belongs to the isocitrate and isopropylmalate dehydrogenases family. LeuB type 1 subfamily. Homodimer. The cofactor is Mg(2+). It depends on Mn(2+) as a cofactor.

It is found in the cytoplasm. The enzyme catalyses (2R,3S)-3-isopropylmalate + NAD(+) = 4-methyl-2-oxopentanoate + CO2 + NADH. It participates in amino-acid biosynthesis; L-leucine biosynthesis; L-leucine from 3-methyl-2-oxobutanoate: step 3/4. Catalyzes the oxidation of 3-carboxy-2-hydroxy-4-methylpentanoate (3-isopropylmalate) to 3-carboxy-4-methyl-2-oxopentanoate. The product decarboxylates to 4-methyl-2 oxopentanoate. In Synechococcus elongatus (strain ATCC 33912 / PCC 7942 / FACHB-805) (Anacystis nidulans R2), this protein is 3-isopropylmalate dehydrogenase.